The chain runs to 92 residues: MTRSLKKNPFVANHLLEKIEKLNMKEEKEIIVTWSRASTIIPTMIGHTIAIHNGKEHLPIYITDRMVGHKLGEFAPTLTFRGHARNDNKSRR.

This sequence belongs to the universal ribosomal protein uS19 family.

The protein localises to the plastid. Its subcellular location is the chloroplast. Its function is as follows. Protein S19 forms a complex with S13 that binds strongly to the 16S ribosomal RNA. This chain is Small ribosomal subunit protein uS19c, found in Acorus calamus (Sweet flag).